Reading from the N-terminus, the 507-residue chain is Variant surface glycoprotein ILTAT 1.25 (507 aa).

A signal peptide spans 1 to 21 (MQSQQQPVFISIILLAINTDA). Over residues 83–95 (EPEAAPKESRSDE) the composition is skewed to basic and acidic residues. Residues 83–102 (EPEAAPKESRSDETPEACKA) form a disordered region. Residues Asn141 and Asn371 are each glycosylated (N-linked (GlcNAc...) asparagine). Residues 384–395 (PTKQPPAKAAAA) are compositionally biased toward low complexity. The tract at residues 384 to 474 (PTKQPPAKAA…KKEEECKSPN (91 aa)) is disordered. The segment covering 396 to 420 (PEKKSNPQKDCNKNTKKRDCKEGDG) has biased composition (basic and acidic residues). The segment covering 444–455 (SAAGAGDAGASD) has biased composition (low complexity). Residues 456 to 474 (TEAKKCSDKKKEEECKSPN) show a composition bias toward basic and acidic residues. Residue Asp484 is the site of GPI-anchor amidated aspartate attachment. The propeptide at 485 to 507 (SSILANKQFALSVASAAFVALLF) is removed in mature form.

It localises to the cell membrane. Its function is as follows. VSG forms a coat on the surface of the parasite. The trypanosome evades the immune response of the host by expressing a series of antigenically distinct VSGs from an estimated 1000 VSG genes. This chain is Variant surface glycoprotein ILTAT 1.25, found in Trypanosoma brucei brucei.